The following is a 434-amino-acid chain: UDP-N-acetylglucosamine 1-carboxyvinyltransferase (434 aa).

22–23 serves as a coordination point for phosphoenolpyruvate; it reads KN. Arg-97 lines the UDP-N-acetyl-alpha-D-glucosamine pocket. Asp-121 serves as the catalytic Proton donor. UDP-N-acetyl-alpha-D-glucosamine is bound by residues Asp-319 and Met-341.

This sequence belongs to the EPSP synthase family. MurA subfamily.

It is found in the cytoplasm. It carries out the reaction phosphoenolpyruvate + UDP-N-acetyl-alpha-D-glucosamine = UDP-N-acetyl-3-O-(1-carboxyvinyl)-alpha-D-glucosamine + phosphate. Its pathway is cell wall biogenesis; peptidoglycan biosynthesis. Cell wall formation. Adds enolpyruvyl to UDP-N-acetylglucosamine. This is UDP-N-acetylglucosamine 1-carboxyvinyltransferase from Bacteroides fragilis (strain ATCC 25285 / DSM 2151 / CCUG 4856 / JCM 11019 / LMG 10263 / NCTC 9343 / Onslow / VPI 2553 / EN-2).